The primary structure comprises 424 residues: MNLLIQNGRVIDPSQGLDEELDLLVENGLVREMGRGLTAPAGVEIVDAAGCCVVPGLVDMHVHLREPGLEYKEDIESGSRAAVAGGFTSIACMPNTKPVIDNKALARYVIARGREAGLCNVFPVGCLTAGSKGERLAEMGELKEAGCVAVSDDGRPVVNAELMRRALEYARGMQIPVISHAEDLSLVGEGVMNEGFTSTELGLKGIPRVAEDIAIARDVMLAEYTNSPIHIAHVSTSGAVRIIRNAKLRGVRVTCETAPHYFTLTDDAVRGYNTNAKMNPPLREADDVAAIRAGLSDGTIDVIATDHAPHHLDEKDVEFNVAANGIIGLETSLPLSLALVEQGVLTMSQLVERMSCCPSLILGLERGTLAKGAVADITLIDPTLPWVVEADKLASKSTNTPWMGQEMKGAAVATIVAGRVVYRR.

Residues His61 and His63 each contribute to the Zn(2+) site. Substrate contacts are provided by residues 63-65 (HLR) and Asn95. 3 residues coordinate Zn(2+): Asp153, His180, and His233. Substrate is bound at residue Asn279. Asp306 provides a ligand contact to Zn(2+). Residue Asp306 is part of the active site. His310 contributes to the substrate binding site.

This sequence belongs to the metallo-dependent hydrolases superfamily. DHOase family. Class I DHOase subfamily. Zn(2+) serves as cofactor.

The catalysed reaction is (S)-dihydroorotate + H2O = N-carbamoyl-L-aspartate + H(+). Its pathway is pyrimidine metabolism; UMP biosynthesis via de novo pathway; (S)-dihydroorotate from bicarbonate: step 3/3. Functionally, catalyzes the reversible cyclization of carbamoyl aspartate to dihydroorotate. This Pelobacter propionicus (strain DSM 2379 / NBRC 103807 / OttBd1) protein is Dihydroorotase.